The following is a 375-amino-acid chain: uncharacterized protein (375 aa).

Belongs to the mimivirus L17x/L18x family.

This is an uncharacterized protein from Acanthamoeba polyphaga (Amoeba).